A 692-amino-acid chain; its full sequence is Alpha-amylase SusG (692 aa).

The N-terminal stretch at 1–22 is a signal peptide; the sequence is MNKHLHFLSLLWLSMLMAFMTA. Cys23 carries the N-palmitoyl cysteine lipid modification. Residue Cys23 is the site of S-diacylglycerol cysteine attachment. The Mg(2+) site is built by Asp73, Asp75, Asp77, Tyr79, and Asp81. Ca(2+) is bound at residue Asn153. Starch binding stretches follow at residues His154, 260–263, and 330–333; these read YYGE and NIMF. Residue Asp352 participates in Ca(2+) binding. Residues 386 to 392 are starch binding; the sequence is RLDAVKH. Asp388 functions as the Nucleophile in the catalytic mechanism. Residue His392 participates in Ca(2+) binding. Residue Glu431 is the Proton donor of the active site. 2 regions of interest (starch binding) are found at residues Asp437 and Arg457.

The protein belongs to the glycosyl hydrolase 13 family. As to quaternary structure, monomer. Ca(2+) serves as cofactor.

It localises to the cell outer membrane. The enzyme catalyses Endohydrolysis of (1-&gt;4)-alpha-D-glucosidic linkages in polysaccharides containing three or more (1-&gt;4)-alpha-linked D-glucose units.. The protein operates within glycan degradation; starch degradation. Its function is as follows. Alpha-amylase that cleaves starch into oligosaccharides before internalization for degradation, the first step in starch degradation. This is Alpha-amylase SusG (susG) from Bacteroides thetaiotaomicron (strain ATCC 29148 / DSM 2079 / JCM 5827 / CCUG 10774 / NCTC 10582 / VPI-5482 / E50).